Consider the following 210-residue polypeptide: MRCLTTPMLLRALAQAARAGPPGGRSLHSSAVAATYKYVNMQDPEMDMKSVTDRAARTLLWTELFRGLGMTLSYLFREPATINYPFEKGPLSPRFRGEHALRRYPSGEERCIACKLCEAICPAQAITIEAEPRADGSRRTTRYDIDMTKCIYCGFCQEACPVDAIVEGPNFEFSTETHEELLYNKEKLLNNGDKWEAEIAANIQADYLYR.

Residues 1–34 constitute a mitochondrion transit peptide; sequence MRCLTTPMLLRALAQAARAGPPGGRSLHSSAVAA. 2 consecutive 4Fe-4S ferredoxin-type domains span residues 102–131 and 141–170; these read RRYP…IEAE and TRYD…EGPN. Residues Cys-111, Cys-114, Cys-117, Cys-121, Cys-150, Cys-153, Cys-156, and Cys-160 each coordinate [4Fe-4S] cluster.

It belongs to the complex I 23 kDa subunit family. Core subunit of respiratory chain NADH dehydrogenase (Complex I) which is composed of 45 different subunits. This is a component of the iron-sulfur (IP) fragment of the enzyme. Interacts with RAB5IF. The cofactor is [4Fe-4S] cluster. Expressed in all tissues with the highest level in heart and skeletal muscle and the lowest level in lung.

The protein localises to the mitochondrion inner membrane. The catalysed reaction is a ubiquinone + NADH + 5 H(+)(in) = a ubiquinol + NAD(+) + 4 H(+)(out). Core subunit of the mitochondrial membrane respiratory chain NADH dehydrogenase (Complex I) which catalyzes electron transfer from NADH through the respiratory chain, using ubiquinone as an electron acceptor. Essential for the catalytic activity and assembly of complex I. The sequence is that of NADH dehydrogenase [ubiquinone] iron-sulfur protein 8, mitochondrial (NDUFS8) from Homo sapiens (Human).